We begin with the raw amino-acid sequence, 86 residues long: Probable acyl carrier protein CCNA_01221 (86 aa).

The 78-residue stretch at 6–83 folds into the Carrier domain; that stretch reads TVTDLSLREI…DLSKLINDLR (78 aa). O-(pantetheine 4'-phosphoryl)serine is present on serine 43.

The protein belongs to the acyl carrier protein (ACP) family.

Its pathway is lipid metabolism; sphingolipid metabolism. Involved in de novo bacterial ceramide synthesis. The protein is Probable acyl carrier protein CCNA_01221 of Caulobacter vibrioides (strain NA1000 / CB15N) (Caulobacter crescentus).